The following is a 142-amino-acid chain: MAKKVQAYVKLQVAAGMANPSPPVGPALGQQGVNIMEFCKAFNAKTESLEKGLPTPVVITVYADRSFTFITKTPPAAVLLKKAAGIKSGSGKPNKDKVGKISRTQLQEIAQTKAADMTGSDIEAMTRSIEGTARSMGLVVED.

Belongs to the universal ribosomal protein uL11 family. In terms of assembly, part of the ribosomal stalk of the 50S ribosomal subunit. Interacts with L10 and the large rRNA to form the base of the stalk. L10 forms an elongated spine to which L12 dimers bind in a sequential fashion forming a multimeric L10(L12)X complex. In terms of processing, one or more lysine residues are methylated.

In terms of biological role, forms part of the ribosomal stalk which helps the ribosome interact with GTP-bound translation factors. The sequence is that of Large ribosomal subunit protein uL11 from Enterobacter sp. (strain 638).